Reading from the N-terminus, the 234-residue chain is MQQSGVPGSRGCALCPLLGVLFFQGVYVIFSLEIKADAHVRGYVGENIKLRCTFKSSSSITDKLTIDWTYRPPSSSRTESIFHYQSFQYPTTAGTFRDRISWVGDVYKGDASISISNPTMKDNGTFSCAVKNPPDVHHNIPATELTVTERGFGTMLSSVALLSILVFIPSTVVVILLLVRMGRKSAGLKKRSKSGYKKSSIEVSDDTDQEGDDCMAKLCVRCAECVDSDYEETY.

The first 31 residues, 1-31 (MQQSGVPGSRGCALCPLLGVLFFQGVYVIFS), serve as a signal peptide directing secretion. Positions 32–148 (LEIKADAHVR…NIPATELTVT (117 aa)) constitute an Ig-like V-type domain. The Extracellular portion of the chain corresponds to 32–158 (LEIKADAHVR…ERGFGTMLSS (127 aa)). An intrachain disulfide couples Cys52 to Cys128. Asn123 is a glycosylation site (N-linked (GlcNAc...) asparagine). Residues 159 to 179 (VALLSILVFIPSTVVVILLLV) form a helical membrane-spanning segment. The Cytoplasmic segment spans residues 180-234 (RMGRKSAGLKKRSKSGYKKSSIEVSDDTDQEGDDCMAKLCVRCAECVDSDYEETY).

Belongs to the myelin P0 protein family.

It localises to the membrane. Functionally, mediates homophilic cell-cell adhesion. The chain is Myelin protein zero-like protein 3 (MPZL3) from Bos taurus (Bovine).